The sequence spans 427 residues: Enolase (427 aa).

A (2R)-2-phosphoglycerate-binding site is contributed by Gln-163. Glu-205 functions as the Proton donor in the catalytic mechanism. Positions 242, 285, and 312 each coordinate Mg(2+). Lys-337, Arg-366, Ser-367, and Lys-388 together coordinate (2R)-2-phosphoglycerate. Lys-337 acts as the Proton acceptor in catalysis.

It belongs to the enolase family. It depends on Mg(2+) as a cofactor.

It localises to the cytoplasm. The protein localises to the secreted. Its subcellular location is the cell surface. It catalyses the reaction (2R)-2-phosphoglycerate = phosphoenolpyruvate + H2O. It participates in carbohydrate degradation; glycolysis; pyruvate from D-glyceraldehyde 3-phosphate: step 4/5. Its function is as follows. Catalyzes the reversible conversion of 2-phosphoglycerate (2-PG) into phosphoenolpyruvate (PEP). It is essential for the degradation of carbohydrates via glycolysis. In Burkholderia ambifaria (strain MC40-6), this protein is Enolase.